A 198-amino-acid chain; its full sequence is FMN-dependent NADH:quinone oxidoreductase (198 aa).

FMN-binding positions include Ser10, 16 to 18 (SQS), 94 to 97 (MYNF), and 138 to 141 (TRGG).

Belongs to the azoreductase type 1 family. In terms of assembly, homodimer. The cofactor is FMN.

It catalyses the reaction 2 a quinone + NADH + H(+) = 2 a 1,4-benzosemiquinone + NAD(+). The catalysed reaction is N,N-dimethyl-1,4-phenylenediamine + anthranilate + 2 NAD(+) = 2-(4-dimethylaminophenyl)diazenylbenzoate + 2 NADH + 2 H(+). Quinone reductase that provides resistance to thiol-specific stress caused by electrophilic quinones. Its function is as follows. Also exhibits azoreductase activity. Catalyzes the reductive cleavage of the azo bond in aromatic azo compounds to the corresponding amines. This Shewanella baltica (strain OS195) protein is FMN-dependent NADH:quinone oxidoreductase.